Reading from the N-terminus, the 151-residue chain is UPF0756 membrane protein Dred_1676 (151 aa).

4 helical membrane-spanning segments follow: residues 9–29, 47–67, 75–95, and 111–131; these read VILL…CASV, THGL…PIAT, LLYN…ILAT, and IIFG…GQPV.

This sequence belongs to the UPF0756 family.

It localises to the cell membrane. This is UPF0756 membrane protein Dred_1676 from Desulforamulus reducens (strain ATCC BAA-1160 / DSM 100696 / MI-1) (Desulfotomaculum reducens).